The primary structure comprises 125 residues: Small ribosomal subunit protein uS12 (125 aa).

The tract at residues 1–24 is disordered; sequence MPTISQLVRKPRKAKRTKSKVPAL. A compositionally biased stretch (basic residues) spans 9–19; the sequence is RKPRKAKRTKS. Asp89 is subject to 3-methylthioaspartic acid. A disordered region spans residues 101-125; sequence SLDTAGVKDRKQARSKYGSKRPKSA. The segment covering 113-125 has biased composition (basic residues); that stretch reads ARSKYGSKRPKSA.

It belongs to the universal ribosomal protein uS12 family. In terms of assembly, part of the 30S ribosomal subunit. Contacts proteins S8 and S17. May interact with IF1 in the 30S initiation complex.

Its function is as follows. With S4 and S5 plays an important role in translational accuracy. In terms of biological role, interacts with and stabilizes bases of the 16S rRNA that are involved in tRNA selection in the A site and with the mRNA backbone. Located at the interface of the 30S and 50S subunits, it traverses the body of the 30S subunit contacting proteins on the other side and probably holding the rRNA structure together. The combined cluster of proteins S8, S12 and S17 appears to hold together the shoulder and platform of the 30S subunit. This Nitrosomonas europaea (strain ATCC 19718 / CIP 103999 / KCTC 2705 / NBRC 14298) protein is Small ribosomal subunit protein uS12.